We begin with the raw amino-acid sequence, 258 residues long: Pimeloyl-[acyl-carrier protein] methyl ester esterase (258 aa).

Residues 16–242 (LVLLHGWGLN…AAHAPFISHP (227 aa)) form the AB hydrolase-1 domain. Residues W22, 82–83 (SM), and 143–147 (FLALQ) contribute to the substrate site. Residue S82 is the Nucleophile of the active site. Residues D207 and H235 contribute to the active site. H235 contacts substrate.

It belongs to the AB hydrolase superfamily. Carboxylesterase BioH family. In terms of assembly, monomer.

It localises to the cytoplasm. It carries out the reaction 6-carboxyhexanoyl-[ACP] methyl ester + H2O = 6-carboxyhexanoyl-[ACP] + methanol + H(+). Its pathway is cofactor biosynthesis; biotin biosynthesis. Functionally, the physiological role of BioH is to remove the methyl group introduced by BioC when the pimeloyl moiety is complete. It allows to synthesize pimeloyl-ACP via the fatty acid synthetic pathway through the hydrolysis of the ester bonds of pimeloyl-ACP esters. The sequence is that of Pimeloyl-[acyl-carrier protein] methyl ester esterase from Yersinia pseudotuberculosis serotype IB (strain PB1/+).